Here is a 310-residue protein sequence, read N- to C-terminus: Protein-L-isoaspartate O-methyltransferase (310 aa).

Disordered regions lie at residues 1 to 42 and 64 to 90; these read MSGE…AADK and SAAA…APSV. Positions 14-32 are enriched in basic and acidic residues; it reads EDLKRAPRKSEGRAGERHA. Residues 64–81 are compositionally biased toward low complexity; the sequence is SAAAKPATAPKPTALKPA. Ser-157 is an active-site residue.

It belongs to the methyltransferase superfamily. L-isoaspartyl/D-aspartyl protein methyltransferase family.

Its subcellular location is the cytoplasm. It carries out the reaction [protein]-L-isoaspartate + S-adenosyl-L-methionine = [protein]-L-isoaspartate alpha-methyl ester + S-adenosyl-L-homocysteine. In terms of biological role, catalyzes the methyl esterification of L-isoaspartyl residues in peptides and proteins that result from spontaneous decomposition of normal L-aspartyl and L-asparaginyl residues. It plays a role in the repair and/or degradation of damaged proteins. The polypeptide is Protein-L-isoaspartate O-methyltransferase (Burkholderia lata (strain ATCC 17760 / DSM 23089 / LMG 22485 / NCIMB 9086 / R18194 / 383)).